The chain runs to 130 residues: Small ribosomal subunit protein uS8 (130 aa).

Belongs to the universal ribosomal protein uS8 family. In terms of assembly, part of the 30S ribosomal subunit.

One of the primary rRNA binding proteins, it binds directly to 16S rRNA central domain where it helps coordinate assembly of the platform of the 30S subunit. This is Small ribosomal subunit protein uS8 from Pyrobaculum neutrophilum (strain DSM 2338 / JCM 9278 / NBRC 100436 / V24Sta) (Thermoproteus neutrophilus).